A 227-amino-acid chain; its full sequence is tRNA (guanine-N(1)-)-methyltransferase (227 aa).

S-adenosyl-L-methionine is bound by residues Gly107 and 127–132; that span reads LGDFIL.

It belongs to the RNA methyltransferase TrmD family. Homodimer.

The protein resides in the cytoplasm. The catalysed reaction is guanosine(37) in tRNA + S-adenosyl-L-methionine = N(1)-methylguanosine(37) in tRNA + S-adenosyl-L-homocysteine + H(+). Its function is as follows. Specifically methylates guanosine-37 in various tRNAs. The sequence is that of tRNA (guanine-N(1)-)-methyltransferase from Mesomycoplasma hyopneumoniae (strain 232) (Mycoplasma hyopneumoniae).